The sequence spans 495 residues: Dipeptide and tripeptide permease A (495 aa).

Over 1 to 20 (MTTSALNPLRQPKPFYLIFS) the chain is Cytoplasmic. Residues 21–41 (IEFWERFGFYGLQGILAVYLV) traverse the membrane as a helical segment. Topologically, residues 42–51 (KALGLREADS) are periplasmic. A helical membrane pass occupies residues 52 to 72 (FTLFSSFIALVYGLIAVGGWL). Residues 73-81 (GDKVLGTKR) lie on the Cytoplasmic side of the membrane. 2 helical membrane-spanning segments follow: residues 82 to 102 (TILL…ASSE) and 103 to 123 (HISL…LFKA). Residues 124-145 (NPSSLLSKCYEENDPRLDGAFT) are Periplasmic-facing. A helical membrane pass occupies residues 146–166 (MYYMAINIGSLLSMLATPWLA). Residues 167-171 (DQFGY) lie on the Cytoplasmic side of the membrane. Residues 172–192 (AHAFALSVVGMLITVANFILM) traverse the membrane as a helical segment. Residues 193-209 (QGWVKNYGSDADFRTPR) lie on the Periplasmic side of the membrane. The chain crosses the membrane as a helical span at residues 210-230 (LSTWLAVLAGVVAACAAAALL). Residues 231-232 (LK) are Cytoplasmic-facing. Residues 233-253 (HEIIANVVLAVLSIGVVGLYV) form a helical membrane-spanning segment. Over 254–266 (KETLLLKGAERKK) the chain is Periplasmic. A helical transmembrane segment spans residues 267–287 (MIVAAILMLQATVFFVLYNQM). Over 288 to 312 (PLSLNFFAIHNTEHMLFGIPVQPEQ) the chain is Cytoplasmic. A helical transmembrane segment spans residues 313–333 (FQSLNPFWIMLASPLLALCYN). At 334 to 344 (KLGNRLPMPHK) the chain is on the periplasmic side. Residues 345 to 365 (FAIGMVLCAGAFLVLPLGAKY) form a helical membrane-spanning segment. Topologically, residues 366–375 (ANAQGLVSSN) are cytoplasmic. A helical membrane pass occupies residues 376-396 (WMVLSYLLQSVGELLISGLGL). Over 397–409 (AMVAQLVPQRLMG) the chain is Periplasmic. Residues 410-430 (FIMGAWFLTSAASSVIAGWVA) traverse the membrane as a helical segment. Residues 431-451 (GLTAAPDNVTNPLATLEIYSR) lie on the Cytoplasmic side of the membrane. Residues 452-472 (VFTQIGVVTGVIAVVTIIIAP) traverse the membrane as a helical segment. Residues 473–495 (WLHRMTLDEKPAHPEHEMALDAR) are Periplasmic-facing.

The protein belongs to the major facilitator superfamily. Proton-dependent oligopeptide transporter (POT/PTR) (TC 2.A.17) family. DtpA subfamily.

It localises to the cell inner membrane. Proton-dependent permease that transports di- and tripeptides. This is Dipeptide and tripeptide permease A from Chromobacterium violaceum (strain ATCC 12472 / DSM 30191 / JCM 1249 / CCUG 213 / NBRC 12614 / NCIMB 9131 / NCTC 9757 / MK).